The following is a 604-amino-acid chain: Kelch-like protein 20 (604 aa).

Residues 63-130 (CDVVLVVGAK…SYTSQITVEE (68 aa)) enclose the BTB domain. The BACK domain maps to 165–267 (CLGIRAFADT…SPKFLVGTVG (103 aa)). Kelch repeat units follow at residues 314-360 (VLFA…VLDD), 362-408 (LYAV…VLGG), 409-455 (YLYA…VLGG), 457-502 (LYAV…VYQD), 504-549 (IYAV…VVNG), and 551-596 (LMAV…VIKM).

As to quaternary structure, component of the BCR(KLHL20) E3 ubiquitin ligase complex, at least composed of cul3, klhl20 and rbx1.

It is found in the cytoplasm. Its subcellular location is the perinuclear region. The protein resides in the nucleus. The protein operates within protein modification; protein ubiquitination. Functionally, substrate-specific adapter of a BCR (BTB-CUL3-RBX1) E3 ubiquitin-protein ligase complex involved in interferon response and anterograde Golgi to endosome transport. The BCR(KLHL20) E3 ubiquitin ligase complex mediates the ubiquitination of target proteins, leading to their degradation by the proteasome. It also specifically mediates 'Lys-33'-linked ubiquitination. The sequence is that of Kelch-like protein 20 (klhl20) from Xenopus laevis (African clawed frog).